The sequence spans 586 residues: MKQQIETLLNQAIERLKTKGVLKPEVTPVIKITHTTDPQHGDFATNLALTLSKAAGMSPHALAEKIVEALPPSGQITEVEIAGPGFINFFVTEGSYQTVVSSILKAGKDYGRSEMGKGQRVHMEYVSANPTGPLHVGHGRGAAYGACVANLLNAAGFEVHREYYVNDAGRQMGILALSVWVRYLQGYEASIELPKNAYQGEYIIDIAEALKAKYGKQFYHSVESIQAKIPEEIDSNADPEAYLDAWVTAQKDLLGPKDFECVFQAALDSILNDIKNDLEEFGVTYDDWFPESRLVREGLIQEGLDLLTKHGYVYEKNGAQWFRATALGDEKDRVLIRKNGLPTYFAADVAYHLHKFNQGYDQIIDIFGADHHGYIPRIRGFLKGLGKAPEKLHILLVQFAILYRGNEKVSMSTRGGTFVTLRELRHEVGNDAARFFYIMRKPDQHLDFDLELAKSQSNENPVYYIQYAHARICSVFRQLKTTQKNWDRPRGMENLSLLSTNYEKELLATLGRYPEVIKRAAMNYAPHLLAHYLQTLANQFHTYYNAERFLIEDDNLRNARLNLINAVQQIIRNGLTLLGVSAPEEM.

A 'HIGH' region motif is present at residues Ala128–His138.

This sequence belongs to the class-I aminoacyl-tRNA synthetase family. In terms of assembly, monomer.

The protein localises to the cytoplasm. The enzyme catalyses tRNA(Arg) + L-arginine + ATP = L-arginyl-tRNA(Arg) + AMP + diphosphate. This chain is Arginine--tRNA ligase, found in Coxiella burnetii (strain RSA 331 / Henzerling II).